A 345-amino-acid polypeptide reads, in one-letter code: Succinylglutamate desuccinylase (345 aa).

Residues His63, Glu66, and His160 each contribute to the Zn(2+) site. Glu224 is a catalytic residue.

This sequence belongs to the AspA/AstE family. Succinylglutamate desuccinylase subfamily. Zn(2+) is required as a cofactor.

It catalyses the reaction N-succinyl-L-glutamate + H2O = L-glutamate + succinate. Its pathway is amino-acid degradation; L-arginine degradation via AST pathway; L-glutamate and succinate from L-arginine: step 5/5. Transforms N(2)-succinylglutamate into succinate and glutamate. The sequence is that of Succinylglutamate desuccinylase from Shewanella woodyi (strain ATCC 51908 / MS32).